The following is a 244-amino-acid chain: MEAPRGWLVISVLAISLASSVTEDVCRAPDGTHGSAGIPGRPGRPGLKGERGEPGAPAIQTGIRGLKGDQGDPGPPGNPGRMGYPGPSGPMGPAGLPGLKGTKGSPGNIKDQPRPAFSAVGPNSVSRDNVVVFGKVITNQENVYQNNTGRFRCSVPGYYYFTFQVVSNWDICLSIRSSRRDQIQPLGFCDFNSKGFFQVVSGGTVLHLQQGDQVWIEKDPSKGRIYHGSEADSIFSGFLIFPSA.

The N-terminal stretch at 1–22 is a signal peptide; that stretch reads MEAPRGWLVISVLAISLASSVT. Positions 28–94 are disordered; that stretch reads APDGTHGSAG…PGPSGPMGPA (67 aa). The Collagen-like domain occupies 31–109; the sequence is GTHGSAGIPG…KGTKGSPGNI (79 aa). 4-hydroxyproline occurs at positions 39 and 45. Lys48 carries the 5-hydroxylysine modification. Lys48 is a glycosylation site (O-linked (Gal...) hydroxylysine). Residues Pro54 and Pro57 each carry the 4-hydroxyproline modification. Lys67 carries the post-translational modification 5-hydroxylysine. An O-linked (Gal...) hydroxylysine glycan is attached at Lys67. 4-hydroxyproline occurs at positions 73, 79, and 85. Low complexity predominate over residues 79–94; sequence PGRMGYPGPSGPMGPA. At Lys100 the chain carries 5-hydroxylysine. The O-linked (Gal...) hydroxylysine glycan is linked to Lys100. The C1q domain occupies 110-244; it reads KDQPRPAFSA…FSGFLIFPSA (135 aa). N-linked (GlcNAc...) asparagine glycosylation occurs at Asn146. Cysteines 172 and 189 form a disulfide. A Ca(2+)-binding site is contributed by Gln198.

In terms of assembly, core component of the complement C1 complex, a calcium-dependent complex composed of 1 molecule of the C1Q subcomplex, 2 molecules of C1R and 2 molecules of C1S. The C1Q subcomplex is composed 18 subunits: 3 chains of C1QA, C1QB, and C1QC trimerize to form 6 collagen-like triple helices connected to six globular ligand-recognition modules (C1q domain). Interacts with CR1 (via Sushi 24 and Sushi 25 domains). Interacts (via C-terminus) with CD33; this interaction activates CD33 inhibitory motifs. In terms of processing, O-linked glycans are assumed to be the Glc-Gal disaccharides typically found as secondary modifications of hydroxylated lysines in collagen-like domains.

Its subcellular location is the secreted. The protein localises to the cell surface. Its activity is regulated as follows. The C1Q subcomplex is inhibited by sulfated molecules, such as triterpenoid sulfates, heparan sulfate, or chondroitin sulfates. Functionally, core component of the complement C1 complex, a multiprotein complex that initiates the classical pathway of the complement system, a cascade of proteins that leads to phagocytosis and breakdown of pathogens and signaling that strengthens the adaptive immune system. The classical complement pathway is initiated by the C1Q subcomplex of the C1 complex, which specifically binds IgG or IgM immunoglobulins complexed with antigens, forming antigen-antibody complexes on the surface of pathogens: C1QA, together with C1QB and C1QC, specifically recognizes and binds the Fc regions of IgG or IgM via its C1q domain. Immunoglobulin-binding activates the proenzyme C1R, which cleaves C1S, initiating the proteolytic cascade of the complement system. The C1Q subcomplex is activated by a hexamer of IgG complexed with antigens, while it is activated by a pentameric IgM. The C1Q subcomplex also recognizes and binds phosphatidylserine exposed on the surface of cells undergoing programmed cell death, possibly promoting activation of the complement system. In Bos taurus (Bovine), this protein is Complement C1q subcomponent subunit A (C1QA).